A 433-amino-acid chain; its full sequence is Phosphomethylpyrimidine synthase 2 (433 aa).

Residues Asn66, Met94, Tyr123, His162, 184–186, 225–228, and Glu264 each bind substrate; these read SRG and DALR. Position 268 (His268) interacts with Zn(2+). Tyr291 lines the substrate pocket. His332 contacts Zn(2+). Residues Cys408, Cys411, and Cys415 each coordinate [4Fe-4S] cluster.

The protein belongs to the ThiC family. [4Fe-4S] cluster serves as cofactor.

It carries out the reaction 5-amino-1-(5-phospho-beta-D-ribosyl)imidazole + S-adenosyl-L-methionine = 4-amino-2-methyl-5-(phosphooxymethyl)pyrimidine + CO + 5'-deoxyadenosine + formate + L-methionine + 3 H(+). It participates in cofactor biosynthesis; thiamine diphosphate biosynthesis. In terms of biological role, catalyzes the synthesis of the hydroxymethylpyrimidine phosphate (HMP-P) moiety of thiamine from aminoimidazole ribotide (AIR) in a radical S-adenosyl-L-methionine (SAM)-dependent reaction. The sequence is that of Phosphomethylpyrimidine synthase 2 from Saccharolobus solfataricus (strain ATCC 35092 / DSM 1617 / JCM 11322 / P2) (Sulfolobus solfataricus).